The following is a 160-amino-acid chain: SsrA-binding protein (160 aa).

Positions lysine 131–aspartate 160 are disordered.

Belongs to the SmpB family.

Its subcellular location is the cytoplasm. Required for rescue of stalled ribosomes mediated by trans-translation. Binds to transfer-messenger RNA (tmRNA), required for stable association of tmRNA with ribosomes. tmRNA and SmpB together mimic tRNA shape, replacing the anticodon stem-loop with SmpB. tmRNA is encoded by the ssrA gene; the 2 termini fold to resemble tRNA(Ala) and it encodes a 'tag peptide', a short internal open reading frame. During trans-translation Ala-aminoacylated tmRNA acts like a tRNA, entering the A-site of stalled ribosomes, displacing the stalled mRNA. The ribosome then switches to translate the ORF on the tmRNA; the nascent peptide is terminated with the 'tag peptide' encoded by the tmRNA and targeted for degradation. The ribosome is freed to recommence translation, which seems to be the essential function of trans-translation. The sequence is that of SsrA-binding protein from Pseudomonas syringae pv. syringae (strain B728a).